The following is a 188-amino-acid chain: MATEGDPTDFVKVLHLLVISFTWGMQVWVSFIAGFVLISQVSMHTFGLVQSKLFPVYFYCLLGGNAVSLAVYAVYHPRELLDWHEGIQMSLFFVAVIMAGLNAQWFGPSATENMLVMQEIEKEHGLGNQVGMSSNREGYTKLREQDPKYKEHRSTFYRYHGLSNLCNLIGFFCITVNLIYLALNLGTI.

4 consecutive transmembrane segments (helical) span residues 18-38 (VISF…FVLI), 54-74 (FPVY…VYAV), 86-106 (GIQM…AQWF), and 168-188 (LIGF…LGTI).

The protein belongs to the TMEM205 family.

Its subcellular location is the membrane. The protein is Transmembrane protein 205 (tmem205) of Danio rerio (Zebrafish).